The following is a 518-amino-acid chain: Wax ester synthase/diacylglycerol acyltransferase 6 (518 aa).

Positions 1-17 (MEIKTRRDTSETSVRKD) are enriched in basic and acidic residues. The tract at residues 1-29 (MEIKTRRDTSETSVRKDDEEEVEEEQPLS) is disordered. Topologically, residues 1-213 (MEIKTRRDTS…LMAGSRGDSR (213 aa)) are cytoplasmic. His163 functions as the Proton acceptor in the catalytic mechanism. A disordered region spans residues 185-205 (PDELPSLPNQNRSSSRSSRLM). A helical transmembrane segment spans residues 214–234 (FLWLVMVIWSAIMLVLNTVCD). Over 235 to 518 (ALEFIATTMF…VQERDSRSLD (284 aa)) the chain is Lumenal. Asn430 carries N-linked (GlcNAc...) asparagine glycosylation.

This sequence in the N-terminal section; belongs to the long-chain O-acyltransferase family. Expressed in roots, stems, leaves, flowers and siliques.

It localises to the cell membrane. Its subcellular location is the endoplasmic reticulum membrane. It is found in the golgi apparatus membrane. The enzyme catalyses an acyl-CoA + a 1,2-diacyl-sn-glycerol = a triacyl-sn-glycerol + CoA. It carries out the reaction a long chain fatty alcohol + a fatty acyl-CoA = a wax ester + CoA. The protein operates within glycerolipid metabolism; triacylglycerol biosynthesis. Its pathway is lipid metabolism. In terms of biological role, bifunctional wax ester synthase/diacylglycerol acyltransferase that uses acyl-CoAs with 16, 18 and 20 carbons as substrates, preferably in combination with 16:0ol alcohol. Involved in cuticular wax biosynthesis. The protein is Wax ester synthase/diacylglycerol acyltransferase 6 of Arabidopsis thaliana (Mouse-ear cress).